A 122-amino-acid polypeptide reads, in one-letter code: Large ribosomal subunit protein bL20 (122 aa).

It belongs to the bacterial ribosomal protein bL20 family.

Its function is as follows. Binds directly to 23S ribosomal RNA and is necessary for the in vitro assembly process of the 50S ribosomal subunit. It is not involved in the protein synthesizing functions of that subunit. This Saccharopolyspora erythraea (strain ATCC 11635 / DSM 40517 / JCM 4748 / NBRC 13426 / NCIMB 8594 / NRRL 2338) protein is Large ribosomal subunit protein bL20.